A 157-amino-acid polypeptide reads, in one-letter code: Ribosomal RNA large subunit methyltransferase H (157 aa).

Residues Leu-73, Gly-105, and 124–129 (MSKMTF) contribute to the S-adenosyl-L-methionine site.

This sequence belongs to the RNA methyltransferase RlmH family. As to quaternary structure, homodimer.

The protein resides in the cytoplasm. The enzyme catalyses pseudouridine(1915) in 23S rRNA + S-adenosyl-L-methionine = N(3)-methylpseudouridine(1915) in 23S rRNA + S-adenosyl-L-homocysteine + H(+). Functionally, specifically methylates the pseudouridine at position 1915 (m3Psi1915) in 23S rRNA. The protein is Ribosomal RNA large subunit methyltransferase H of Bacteroides fragilis (strain ATCC 25285 / DSM 2151 / CCUG 4856 / JCM 11019 / LMG 10263 / NCTC 9343 / Onslow / VPI 2553 / EN-2).